We begin with the raw amino-acid sequence, 170 residues long: NADH-quinone oxidoreductase subunit B (170 aa).

Residues cysteine 37, cysteine 38, cysteine 102, and cysteine 131 each contribute to the [4Fe-4S] cluster site.

Belongs to the complex I 20 kDa subunit family. In terms of assembly, NDH-1 is composed of 14 different subunits. Subunits NuoB, C, D, E, F, and G constitute the peripheral sector of the complex. It depends on [4Fe-4S] cluster as a cofactor.

Its subcellular location is the cell inner membrane. It carries out the reaction a quinone + NADH + 5 H(+)(in) = a quinol + NAD(+) + 4 H(+)(out). Its function is as follows. NDH-1 shuttles electrons from NADH, via FMN and iron-sulfur (Fe-S) centers, to quinones in the respiratory chain. The immediate electron acceptor for the enzyme in this species is believed to be ubiquinone. Couples the redox reaction to proton translocation (for every two electrons transferred, four hydrogen ions are translocated across the cytoplasmic membrane), and thus conserves the redox energy in a proton gradient. In Geobacter sp. (strain M21), this protein is NADH-quinone oxidoreductase subunit B.